The primary structure comprises 178 residues: Hypoxanthine phosphoribosyltransferase (178 aa).

Residues Arg43 and Gly44 each contribute to the diphosphate site. Residue Glu99 coordinates GMP. Glu99 provides a ligand contact to IMP. Glu99 and Asp100 together coordinate Mg(2+). Asp103 functions as the Proton acceptor in the catalytic mechanism. GMP-binding positions include Asp103–Leu108, Lys131, and Asp159. Residues Asp103–Leu108 and Lys131 each bind IMP. Residue Arg165 coordinates diphosphate.

It belongs to the purine/pyrimidine phosphoribosyltransferase family. In terms of assembly, homotetramer. Mg(2+) serves as cofactor.

The protein resides in the cytoplasm. It carries out the reaction IMP + diphosphate = hypoxanthine + 5-phospho-alpha-D-ribose 1-diphosphate. It catalyses the reaction GMP + diphosphate = guanine + 5-phospho-alpha-D-ribose 1-diphosphate. The protein operates within purine metabolism; IMP biosynthesis via salvage pathway; IMP from hypoxanthine: step 1/1. Purine salvage pathway enzyme which catalyzes the transfer of the ribosyl-5-phosphate group from 5-phospho-alpha-D-ribose 1-diphosphate (PRPP) to the N9 position of hypoxanthine to yield IMP (inosine 5'-monophosphate). To a lesser extent, can also act on guanine leading to GMP, but shows a highly less efficient activity with xanthine. In Salmonella typhimurium (strain LT2 / SGSC1412 / ATCC 700720), this protein is Hypoxanthine phosphoribosyltransferase (hpt).